An 825-amino-acid chain; its full sequence is Ent-copalyl diphosphate synthase 2, chloroplastic (825 aa).

The N-terminal 70 residues, 1-70 (MVLSSSCTTV…KGSSLTPIVR (70 aa)), are a transit peptide targeting the chloroplast. Lys-241 is a substrate binding site. A DXDD motif motif is present at residues 373 to 376 (EVDD). A substrate-binding site is contributed by Lys-459.

The protein belongs to the terpene synthase family. Tpsc subfamily. The cofactor is Mg(2+). Expressed in tassels.

The protein localises to the plastid. It is found in the chloroplast. The catalysed reaction is (2E,6E,10E)-geranylgeranyl diphosphate = ent-copalyl diphosphate. It functions in the pathway plant hormone biosynthesis; gibberellin biosynthesis. Functionally, involved in gibberellin biosynthesis. Catalyzes the conversion of geranylgeranyl diphosphate to the gibberellin precursor ent-copalyl diphosphate (ent-CPP). Involved in the production of antifungal dolabralexin phytoalexins in response to biotic and abiotic stresses. In response to fungal infection and in associtation with KSL4, is involved in the production dolabradiene, a type of antifungal phytoalexin. This Zea mays (Maize) protein is Ent-copalyl diphosphate synthase 2, chloroplastic.